A 152-amino-acid chain; its full sequence is Endoribonuclease YbeY (152 aa).

Zn(2+) contacts are provided by histidine 101, histidine 105, and histidine 111. The tract at residues proline 132–arginine 152 is disordered. The span at lysine 141 to arginine 152 shows a compositional bias: basic residues.

It belongs to the endoribonuclease YbeY family. The cofactor is Zn(2+).

The protein resides in the cytoplasm. Single strand-specific metallo-endoribonuclease involved in late-stage 70S ribosome quality control and in maturation of the 3' terminus of the 16S rRNA. This is Endoribonuclease YbeY from Koribacter versatilis (strain Ellin345).